A 90-amino-acid polypeptide reads, in one-letter code: Small ribosomal subunit protein bS18A (90 aa).

This sequence belongs to the bacterial ribosomal protein bS18 family. As to quaternary structure, part of the 30S ribosomal subunit. Forms a tight heterodimer with protein bS6.

Its function is as follows. Binds as a heterodimer with protein bS6 to the central domain of the 16S rRNA, where it helps stabilize the platform of the 30S subunit. This is Small ribosomal subunit protein bS18A from Roseiflexus castenholzii (strain DSM 13941 / HLO8).